A 245-amino-acid chain; its full sequence is Ribosomal RNA large subunit methyltransferase E (245 aa).

Residues 1-26 (MTKPPVGSNRSGRKLGQKVKKGKLKA) are disordered. Over residues 11-26 (SGRKLGQKVKKGKLKA) the composition is skewed to basic residues. Residues G81, W83, D104, D120, and D144 each coordinate S-adenosyl-L-methionine. The Proton acceptor role is filled by K184.

The protein belongs to the class I-like SAM-binding methyltransferase superfamily. RNA methyltransferase RlmE family.

It is found in the cytoplasm. It carries out the reaction uridine(2552) in 23S rRNA + S-adenosyl-L-methionine = 2'-O-methyluridine(2552) in 23S rRNA + S-adenosyl-L-homocysteine + H(+). Specifically methylates the uridine in position 2552 of 23S rRNA at the 2'-O position of the ribose in the fully assembled 50S ribosomal subunit. This Sinorhizobium medicae (strain WSM419) (Ensifer medicae) protein is Ribosomal RNA large subunit methyltransferase E.